Reading from the N-terminus, the 437-residue chain is Vasoactive intestinal polypeptide receptor 2 (437 aa).

The signal sequence occupies residues 1–22 (MRASVVLTCYCWLLVRVSSIHP). Topologically, residues 23 to 123 (ECRFHLEIQE…EDESKISFYI (101 aa)) are extracellular. Cystine bridges form between Cys37/Cys60, Cys51/Cys92, and Cys74/Cys108. 3 N-linked (GlcNAc...) asparagine glycosylation sites follow: Asn57, Asn87, and Asn91. The chain crosses the membrane as a helical span at residues 124 to 149 (LVKAIYTLGYSVSLMSLTTGSIIICL). Over 150-157 (FRKLHCTR) the chain is Cytoplasmic. A helical transmembrane segment spans residues 158 to 179 (NYIHLNLFLSFMLRAISVLVKD). Residues 180–202 (SVLYSSSGLLRCHDQPASWVGCK) lie on the Extracellular side of the membrane. The cysteines at positions 201 and 270 are disulfide-linked. A helical membrane pass occupies residues 203–227 (LSLVFFQYCIMANFYWLLVEGLYLH). Over 228-238 (TLLVAILPPSR) the chain is Cytoplasmic. Residues 239–260 (CFLAYLLIGWGIPSVCIGAWTA) traverse the membrane as a helical segment. At 261–279 (TRLSLEDTGCWDTNDHSIP) the chain is on the extracellular side. Residues 280-303 (WWVIRMPILISIVVNFALFISIVR) traverse the membrane as a helical segment. Over 304 to 324 (ILLQKLTSPDVGGNDQSQYKR) the chain is Cytoplasmic. A helical membrane pass occupies residues 325-345 (LAKSTLLLIPLFGVHYMVFAA). At 346-353 (FPIGISST) the chain is on the extracellular side. Residues 354–377 (YQILFELCVGSFQGLVVAVLYCFL) traverse the membrane as a helical segment. Over 378-437 (NSEVQCELKRRWRGLCLTQAGSRDYRLHSWSMSRNGSESALQIHRGSRTQSFLQSETSVI) the chain is Cytoplasmic.

This sequence belongs to the G-protein coupled receptor 2 family. In terms of assembly, interacts with ADCYAP1/PACAP (via N-terminal extracellular domain); activated by PACAP27 and CAPAC38 neuropeptides. Interacts with VIP; the interaction results in VIPR1 activation. As to expression, expressed at high levels in the MIN6 cells, at moderate levels in pancreatic islets, insulin-secreting cells, lung, brain, stomach, and colon, and at low levels in the heart.

It is found in the cell membrane. Functionally, g protein-coupled receptor activated by the neuropeptides vasoactive intestinal peptide (VIP) and pituitary adenylate cyclase-activating polypeptide (ADCYAP1/PACAP). Binds VIP and both PACAP27 and PACAP38 bioactive peptides with the order of ligand affinity of VIP = PACAP38 &gt; PACAP27. Ligand binding causes a conformation change that triggers signaling via guanine nucleotide-binding proteins (G proteins) and modulates the activity of downstream effectors. Activates cAMP-dependent pathway. May be coupled to phospholipase C. The sequence is that of Vasoactive intestinal polypeptide receptor 2 from Mus musculus (Mouse).